The sequence spans 70 residues: Small ribosomal subunit protein bS21 (70 aa).

It belongs to the bacterial ribosomal protein bS21 family.

The protein is Small ribosomal subunit protein bS21 (rpsU) of Helicobacter pylori (strain J99 / ATCC 700824) (Campylobacter pylori J99).